The following is a 187-amino-acid chain: Ribosome-recycling factor (187 aa).

This sequence belongs to the RRF family.

The protein localises to the cytoplasm. Its function is as follows. Responsible for the release of ribosomes from messenger RNA at the termination of protein biosynthesis. May increase the efficiency of translation by recycling ribosomes from one round of translation to another. This Parvibaculum lavamentivorans (strain DS-1 / DSM 13023 / NCIMB 13966) protein is Ribosome-recycling factor.